The chain runs to 1009 residues: UvrABC system protein A (1009 aa).

Position 32–39 (G32–S39) interacts with ATP. ABC transporter domains are found at residues W314–Q592 and R612–R941. G645 to S652 contributes to the ATP binding site. The segment at C744–C770 adopts a C4-type zinc-finger fold. A disordered region spans residues K956–A1009. The segment covering R964–T997 has biased composition (low complexity). A compositionally biased stretch (basic residues) spans A998 to A1009.

This sequence belongs to the ABC transporter superfamily. UvrA family. Forms a heterotetramer with UvrB during the search for lesions.

It is found in the cytoplasm. The UvrABC repair system catalyzes the recognition and processing of DNA lesions. UvrA is an ATPase and a DNA-binding protein. A damage recognition complex composed of 2 UvrA and 2 UvrB subunits scans DNA for abnormalities. When the presence of a lesion has been verified by UvrB, the UvrA molecules dissociate. The protein is UvrABC system protein A of Streptomyces avermitilis (strain ATCC 31267 / DSM 46492 / JCM 5070 / NBRC 14893 / NCIMB 12804 / NRRL 8165 / MA-4680).